The sequence spans 392 residues: Phosphoglycerate kinase (392 aa).

Substrate contacts are provided by residues 21–23 (DFN), Arg-36, 59–62 (HLGR), Arg-118, and Arg-151. Residues Lys-201, Gly-292, Glu-323, and 349 to 352 (GGDS) each bind ATP.

It belongs to the phosphoglycerate kinase family. As to quaternary structure, monomer.

It localises to the cytoplasm. The catalysed reaction is (2R)-3-phosphoglycerate + ATP = (2R)-3-phospho-glyceroyl phosphate + ADP. Its pathway is carbohydrate degradation; glycolysis; pyruvate from D-glyceraldehyde 3-phosphate: step 2/5. The chain is Phosphoglycerate kinase from Borrelia duttonii (strain Ly).